The sequence spans 150 residues: 5-hydroxytryptamine receptor 1B (150 aa).

The Extracellular segment spans residues 1 to 83 (VEARSRILKQ…AARERKATKT (83 aa)). Positions 27–40 (DSPGSTSSVTSINS) are enriched in polar residues. Residues 27-50 (DSPGSTSSVTSINSRAPDLPSESG) are disordered. A helical membrane pass occupies residues 84–105 (LGIILGAFIVCWLPFFIISLAM). Topologically, residues 106–115 (PICKDACWFH) are cytoplasmic. Residues 116-138 (LAIFDFFTWLGYLNSLINPIIYT) form a helical membrane-spanning segment. The NPxxY motif; important for ligand-induced conformation changes and signaling motif lies at 133 to 137 (NPIIY). Over 139-150 (MFNEDFKQAFHK) the chain is Extracellular.

Belongs to the G-protein coupled receptor 1 family. Homodimer. Heterodimer with HTR1D. Post-translationally, phosphorylated. Desensitization of the receptor may be mediated by its phosphorylation. In terms of processing, palmitoylated.

It localises to the cell membrane. Its function is as follows. G-protein coupled receptor for 5-hydroxytryptamine (serotonin). Also functions as a receptor for ergot alkaloid derivatives, various anxiolytic and antidepressant drugs and other psychoactive substances, such as lysergic acid diethylamide (LSD). Ligand binding causes a conformation change that triggers signaling via guanine nucleotide-binding proteins (G proteins) and modulates the activity of downstream effectors, such as adenylate cyclase. HTR1B is coupled to G(i)/G(o) G alpha proteins and mediates inhibitory neurotransmission by inhibiting adenylate cyclase activity. Arrestin family members inhibit signaling via G proteins and mediate activation of alternative signaling pathways. Regulates the release of 5-hydroxytryptamine, dopamine and acetylcholine in the brain, and thereby affects neural activity, nociceptive processing, pain perception, mood and behavior. Besides, plays a role in vasoconstriction of cerebral arteries. This is 5-hydroxytryptamine receptor 1B (HTR1B) from Sus scrofa (Pig).